The sequence spans 874 residues: Protein Son (874 aa).

3 disordered regions span residues 1 to 45 (MTEN…ERPD), 68 to 98 (RRSNSNELGNNDESGESESSASADDKKNIKP), and 120 to 368 (ELLD…SRDL). A compositionally biased stretch (polar residues) spans 12–24 (ETPQVAGSQTNPP). Residues 70-89 (SNSNELGNNDESGESESSAS) are compositionally biased toward low complexity. 2 stretches are compositionally biased toward basic residues: residues 128 to 147 (KKKKKVKKEKKDKKAKKKKT) and 162 to 175 (KHKHKRKKHKHKDI). Basic and acidic residues-rich tracts occupy residues 176–219 (RVKD…KDKF) and 226–277 (SEKE…ERVR). A G-patch domain is found at 705–751 (TGGMGMALLQKMGWKPGEGLGRCKTGSLQPLLLDVKLDKRGLVSRDD). The DRBM domain maps to 800 to 870 (HPVCVLNELT…AALCLRSLGI (71 aa)).

In terms of tissue distribution, expressed in ovarian nurse cells (at protein level).

Its subcellular location is the nucleus. Its function is as follows. RNA-binding protein that protects nascent transcripts containing intronic transposable sequences, known as INE-1, from being degraded by DIP1. Modulates DIP1 activity by repressing its sumoylation levels. This ensures that intronic sequences will be degradated only after splicing. In the ovaries, regulates germline stem cells (GSCs) self-renewal by repressing the expression of the GSC differentiation-promoting factor Rga. The polypeptide is Protein Son (Drosophila melanogaster (Fruit fly)).